A 729-amino-acid chain; its full sequence is Circadian input-output histidine kinase CikA (729 aa).

Residues 1–169 form an N-terminal domain region; it reads MPQPIFDRIL…QVTTQIRQSL (169 aa). The segment at 170–314 is GAF domain; that stretch reads ELPELLKIAV…VEFLTHLSQH (145 aa). Residues 366–587 enclose the Histidine kinase domain; that stretch reads TMSHELRTPL…TFTVGLPAIS (222 aa). Phosphohistidine; by autocatalysis is present on His-369. Residues 613 to 729 are psR domain, binds KaiB; it reads EGRIVLVSED…GLTSLATSAQ (117 aa).

The protein in the N-terminal section; belongs to the phytochrome family. Homodimer. Part of the circadian clock (KaiA, KaiB, KaiC, CikA, RpaA, SasA), the composition of which varies during the circadian cycle. KaiA and CikA compete for binding to KaiB(fs). The PsR domain binds the KaiB:KaiC CI complex but poorly to either protein alone. KaiA and CikA bind to the same region of the KaiB(fs) form and therefore compete.

It catalyses the reaction ATP + protein L-histidine = ADP + protein N-phospho-L-histidine.. Its function is as follows. Functions in an input pathway to the Kai circadian clock. Senses oxidized quinones via its C-terminal pseudo-receiver domain, providing a link between cell metabolism and the clock. Affects the ratio of phosphorylated to unphosphorylated KaiC, binds quinones via its pseudo-receptor domain. Quinone-binding destabilizes the protein rapidly. Autophosphorylates, does not transfer the phosphate to its pseudo-receiver (PsR) domain. May play a role in cell division. Also functions in a two-component CikA/RpaA output pathway from the circadian clock, negatively regulating kaiBC expression independently of labA and of sasA. One of three clock output pathways. Dephosphorylates phospho-RpaA, enhanced by KaiB and KaiC, has only modest kinase activity on RpaA. This is Circadian input-output histidine kinase CikA from Thermosynechococcus vestitus (strain NIES-2133 / IAM M-273 / BP-1).